The primary structure comprises 302 residues: Mas-related G-protein coupled receptor member A3 (302 aa).

Over 1–17 (MNETIPGSIDIETLIPD) the chain is Extracellular. N-linked (GlcNAc...) asparagine glycosylation is present at Asn2. The helical transmembrane segment at 18–38 (LMIIIFGLVGLTGNAIVFWLL) threads the bilayer. Residues 39–46 (GFRMHRTA) are Cytoplasmic-facing. The helical transmembrane segment at 47-67 (FLVYILNLALADFLFLLCHII) threads the bilayer. An N-linked (GlcNAc...) asparagine glycan is attached at Asn68. At 68-81 (NSTVDLLKFTLPKG) the chain is on the extracellular side. A helical transmembrane segment spans residues 82-102 (IFAFCFHTIKRVLYITGLSML). The Cytoplasmic segment spans residues 103–129 (SAISTERCLSVLCPIWYHCRRPEHTST). The helical transmembrane segment at 130–150 (VMCAVIWVLSLLICILDGYFC) threads the bilayer. The Extracellular portion of the chain corresponds to 151 to 167 (GYLDNHYFNYSVCQAWD). An N-linked (GlcNAc...) asparagine glycan is attached at Asn159. The chain crosses the membrane as a helical span at residues 168 to 188 (IFIGAYLMFLFVVLCLSTLAL). The Cytoplasmic segment spans residues 189-211 (LARLFCGARNMKFTRLFVTIMLT). A helical membrane pass occupies residues 212–232 (VLVFLLCGLPWGITWFLLFWI). Over 233–242 (APGVFVLDYS) the chain is Extracellular. The helical transmembrane segment at 243–263 (PLLVLTAINSCANPIIYFFVG) threads the bilayer. Residues 264–302 (SFRQRLNKQTLKMVLQKALQDTPETPENMVEMSRNKAEP) lie on the Cytoplasmic side of the membrane.

This sequence belongs to the G-protein coupled receptor 1 family. Mas subfamily. In terms of tissue distribution, expressed exclusively in dorsal root ganglia and nodose ganglia. Expressed in a subset of sensory neurons that includes nociceptors. Expressed in the subclass of non-peptidergic sensory neurons that are IB4(+) and VR1(-).

The protein resides in the cell membrane. In terms of biological role, orphan receptor. May be a receptor for RFamide-family neuropeptides such as NPFF and NPAF, which are analgesic in vivo. May regulate nociceptor function and/or development, including the sensation or modulation of pain. Activated by the antimalarial drug chloroquine. Mediates chloroquine-induced itch, in a histamine-independent manner. This chain is Mas-related G-protein coupled receptor member A3 (Mrgpra3), found in Mus musculus (Mouse).